The sequence spans 63 residues: uncharacterized protein (63 aa).

A helical transmembrane segment spans residues 3 to 23 (IIYIILGFLSLAIGIIGIFPS).

The protein resides in the membrane. This is an uncharacterized protein from Haemophilus influenzae (strain ATCC 51907 / DSM 11121 / KW20 / Rd).